The primary structure comprises 309 residues: Postacrosomal sheath WW domain-binding protein (309 aa).

The 43-residue stretch at 45–87 (GRKTGTLFLTSYRVIFITSCSISDPMLSFMMPFDLMTNLTVEQ) folds into the GRAM domain. 10 tandem repeats follow at residues 175–181 (YGAPPAG), 182–188 (YGAPPPG), 189–195 (YGAPPAG), 217–223 (YGAPPLG), 224–230 (YGAPPAG), 231–237 (YGAPPLG), 238–244 (YGAPPLG), 245–251 (YGTPPLG), 252–258 (YGAPPLG), and 259–265 (YGAPPAG). The segment at 175-265 (YGAPPAGYGA…PLGYGAPPAG (91 aa)) is 10 X 7 AA tandem repeat of Y-G-X-P-P-X-G. The PPxY motif motif lies at 186-189 (PPGY). Low complexity predominate over residues 251-272 (GYGAPPLGYGAPPAGNEGPPAG). Residues 251–309 (GYGAPPLGYGAPPAGNEGPPAGYRASPAGSGARPQESTAAQAPENEASLPSASSSQVHS) are disordered. Over residues 298-309 (SLPSASSSQVHS) the composition is skewed to polar residues.

Expressed in testis.

In terms of biological role, may play a role in meiotic resumption and pronuclear formation, mediated by a WW domain-signaling pathway during fertilization. This Homo sapiens (Human) protein is Postacrosomal sheath WW domain-binding protein (WBP2NL).